The sequence spans 347 residues: 8-amino-8-demethylriboflavin N,N-dimethyltransferase (347 aa).

Residues Asp209 and 235–237 (GDF) contribute to the S-adenosyl-L-methionine site.

Belongs to the class I-like SAM-binding methyltransferase superfamily. Cation-independent O-methyltransferase family. As to quaternary structure, homodimer.

The enzyme catalyses 8-amino-8-demethylriboflavin + 2 S-adenosyl-L-methionine = roseoflavin + 2 S-adenosyl-L-homocysteine + 2 H(+). It participates in antibiotic biosynthesis. Functionally, catalyzes the S-adenosyl methionine-dependent conversion of 8-amino-8-demethyl-D-riboflavin (AF) into 8-methylamino-8-demethyl-D-riboflavin (MAF) and roseoflavin (RoF), the last two steps in the biosynthesis of the antibiotic roseoflavin. This is 8-amino-8-demethylriboflavin N,N-dimethyltransferase from Streptomyces davaonensis (strain DSM 101723 / JCM 4913 / KCC S-0913 / 768).